The chain runs to 389 residues: Succinate--CoA ligase [ADP-forming] subunit beta (389 aa).

One can recognise an ATP-grasp domain in the interval 9–236 (KELFAKHGVP…RDATDPLELK (228 aa)). ATP-binding positions include Lys-45, 52 to 54 (GRG), Ser-94, and Glu-99. The Mg(2+) site is built by Asn-191 and Asp-205. Substrate-binding positions include Asn-256 and 318–320 (GIT).

This sequence belongs to the succinate/malate CoA ligase beta subunit family. In terms of assembly, heterotetramer of two alpha and two beta subunits. Mg(2+) is required as a cofactor.

The catalysed reaction is succinate + ATP + CoA = succinyl-CoA + ADP + phosphate. The enzyme catalyses GTP + succinate + CoA = succinyl-CoA + GDP + phosphate. Its pathway is carbohydrate metabolism; tricarboxylic acid cycle; succinate from succinyl-CoA (ligase route): step 1/1. Its function is as follows. Succinyl-CoA synthetase functions in the citric acid cycle (TCA), coupling the hydrolysis of succinyl-CoA to the synthesis of either ATP or GTP and thus represents the only step of substrate-level phosphorylation in the TCA. The beta subunit provides nucleotide specificity of the enzyme and binds the substrate succinate, while the binding sites for coenzyme A and phosphate are found in the alpha subunit. In Rhodococcus erythropolis (strain PR4 / NBRC 100887), this protein is Succinate--CoA ligase [ADP-forming] subunit beta.